The sequence spans 808 residues: Disks large-associated protein 5 (808 aa).

2 positions are modified to phosphoserine: serine 66 and serine 70. Residues 88 to 119 are a coiled coil; sequence QRKQLLQKYKEEKQLQKLKEQREKAKRGVFKV. The disordered stretch occupies residues 134–282; sequence QRGAKAEPEK…QTRETSEMGP (149 aa). Basic and acidic residues-rich tracts occupy residues 135-145 and 180-193; these read RGAKAEPEKAF and QTSEKQPLDRERKV. The residue at position 201 (serine 201) is a Phosphoserine. 2 stretches are compositionally biased toward basic and acidic residues: residues 232-241 and 249-278; these read TNEKGSERMR and KKPEGKPDKVIPSKVERDEKHLDSQTRETS. Serine 328 bears the Phosphoserine mark. 2 positions are modified to phosphothreonine: threonine 337 and threonine 386. The interval 377 to 413 is disordered; the sequence is HVLNQKGASTSDSNHASVKGVPCSEGSEGQTSQPPHD. The span at 382–392 shows a compositional bias: polar residues; sequence KGASTSDSNHA. Serine 598 carries the phosphoserine modification. The residue at position 607 (serine 607) is a Phosphoserine; by AURKA. Serine 612 bears the Phosphoserine mark. At threonine 617 the chain carries Phosphothreonine. At serine 620 the chain carries Phosphoserine. The interval 629-654 is disordered; it reads RAAGDLLRQKMPLKKPDPQSSKSEHV. A compositionally biased stretch (basic and acidic residues) spans 642–654; that stretch reads KKPDPQSSKSEHV. Threonine 728 is modified (phosphothreonine). The segment at 735 to 757 is disordered; it reads SNPETNTSSQSNTSQEEAEASQS. Serine 743 bears the Phosphoserine mark. At serine 797 the chain carries Phosphoserine; by AURKA. Serine 806 bears the Phosphoserine mark.

The protein belongs to the SAPAP family. Interacts with CDC2. Interacts with the C-terminal proline-rich region of FBXO7. Recruited by FBXO7 to a SCF (SKP1-CUL1-F-box) protein complex in a CDC2/Cyclin B-phosphorylation dependent manner. Interacts with CDH1. Post-translationally, ubiquitinated, leading to its degradation. In terms of processing, decreased phosphorylation levels are associated with the differentiation of intestinal epithelial cells. As to expression, expressed at low levels in normal resting liver. Up-regulated in regenerating liver after partial hepatectomy.

It localises to the nucleus. It is found in the cytoplasm. Its subcellular location is the cytoskeleton. The protein resides in the spindle. In terms of biological role, potential cell cycle regulator that may play a role in carcinogenesis of cancer cells. Mitotic phosphoprotein regulated by the ubiquitin-proteasome pathway. Key regulator of adherens junction integrity and differentiation that may be involved in CDH1-mediated adhesion and signaling in epithelial cells. The sequence is that of Disks large-associated protein 5 (Dlgap5) from Mus musculus (Mouse).